The following is a 634-amino-acid chain: Growth hormone receptor (634 aa).

A signal peptide spans 1–18 (MDLWQLLLTLAVAGSSDA). Residues 19 to 260 (FSGSEATPAF…NPSACEEDFQ (242 aa)) lie on the Extracellular side of the membrane. Residue N46 is glycosylated (N-linked (GlcNAc...) asparagine). Cysteines 56 and 66 form a disulfide. N73 carries N-linked (GlcNAc...) asparagine glycosylation. Residues C97 and C108 are joined by a disulfide bond. The N-linked (GlcNAc...) asparagine glycan is linked to N111. The cysteines at positions 122 and 136 are disulfide-linked. The Fibronectin type-III domain maps to 147–250 (PPVGLNWTLL…EVLLITFPQM (104 aa)). Residues N152, N157, and N196 are each glycosylated (N-linked (GlcNAc...) asparagine). The short motif at 236-240 (YGKFS) is the WSXWS motif element. Residues 261-284 (FPWFLIIIFGILGLTVTLFLLIFS) form a helical membrane-spanning segment. Over 285-634 (KQQRIKMLIL…STDQLNKIMP (350 aa)) the chain is Cytoplasmic. Residues 290–375 (KMLILPPVPV…HEKSLSIFGA (86 aa)) are required for JAK2 binding. A Box 1 motif motif is present at residues 293–301 (ILPPVPVPK). Positions 336-345 (DSWVEFIELD) match the UbE motif motif. Position 337 is a phosphoserine (S337). The disordered stretch occupies residues 451-471 (KPRPLPIGGTESTHQAVHTQL). Over residues 460-471 (TESTHQAVHTQL) the composition is skewed to polar residues. A phosphotyrosine mark is found at Y483 and Y591.

This sequence belongs to the type I cytokine receptor family. Type 1 subfamily. As to quaternary structure, on growth hormone (GH) binding, forms homodimers and binds JAK2 via a box 1-containing domain. In terms of processing, the soluble form (GHBP) is produced by phorbol ester-promoted proteolytic cleavage at the cell surface (shedding) by ADAM17/TACE. Shedding is inhibited by growth hormone (GH) binding to the receptor probably due to a conformational change in GHR rendering the receptor inaccessible to ADAM17. On GH binding, phosphorylated on tyrosine residues in the cytoplasmic domain by JAK2. Post-translationally, ubiquitinated by the ECS(SOCS2) complex following ligand-binding and phosphorylation by JAK2, leading to its degradation by the proteasome. Regulation by the ECS(SOCS2) complex acts as a negative feedback loop of growth hormone receptor signaling. Ubiquitination is not sufficient for GHR internalization.

It is found in the cell membrane. It localises to the secreted. In terms of biological role, receptor for pituitary gland growth hormone (GH1) involved in regulating postnatal body growth. On ligand binding, couples to the JAK2/STAT5 pathway. The soluble form (GHBP) acts as a reservoir of growth hormone in plasma and may be a modulator/inhibitor of GH signaling. This is Growth hormone receptor (GHR) from Ovis aries (Sheep).